Reading from the N-terminus, the 277-residue chain is S-formylglutathione hydrolase FrmB (277 aa).

Residues Ser-145, Asp-221, and His-254 each act as charge relay system in the active site.

The protein belongs to the esterase D family.

The enzyme catalyses S-formylglutathione + H2O = formate + glutathione + H(+). Its function is as follows. Serine hydrolase involved in the detoxification of formaldehyde. Hydrolyzes S-formylglutathione to glutathione and formate. This chain is S-formylglutathione hydrolase FrmB (frmB), found in Escherichia coli O6:K15:H31 (strain 536 / UPEC).